The sequence spans 186 residues: Ribosome-recycling factor (186 aa).

It belongs to the RRF family.

The protein localises to the cytoplasm. Responsible for the release of ribosomes from messenger RNA at the termination of protein biosynthesis. May increase the efficiency of translation by recycling ribosomes from one round of translation to another. The protein is Ribosome-recycling factor of Nitratiruptor sp. (strain SB155-2).